Consider the following 130-residue polypeptide: Large ribosomal subunit protein bL20 (130 aa).

It belongs to the bacterial ribosomal protein bL20 family.

Binds directly to 23S ribosomal RNA and is necessary for the in vitro assembly process of the 50S ribosomal subunit. It is not involved in the protein synthesizing functions of that subunit. The sequence is that of Large ribosomal subunit protein bL20 from Solibacter usitatus (strain Ellin6076).